The primary structure comprises 101 residues: Large ribosomal subunit protein bL21 (101 aa).

It belongs to the bacterial ribosomal protein bL21 family. As to quaternary structure, part of the 50S ribosomal subunit. Contacts protein L20.

Functionally, this protein binds to 23S rRNA in the presence of protein L20. The polypeptide is Large ribosomal subunit protein bL21 (Metamycoplasma arthritidis (strain 158L3-1) (Mycoplasma arthritidis)).